The primary structure comprises 464 residues: Glutamate decarboxylase beta (464 aa).

N6-(pyridoxal phosphate)lysine is present on K275.

The protein belongs to the group II decarboxylase family. Pyridoxal 5'-phosphate is required as a cofactor.

The catalysed reaction is L-glutamate + H(+) = 4-aminobutanoate + CO2. Converts internalized glutamate to GABA and increases the internal pH. Involved in glutamate-dependent acid resistance in gastric fluid. This is Glutamate decarboxylase beta (gadB) from Listeria innocua serovar 6a (strain ATCC BAA-680 / CLIP 11262).